A 367-amino-acid chain; its full sequence is GDP-perosamine synthase (367 aa).

K181 carries the post-translational modification N6-(pyridoxal phosphate)lysine.

This sequence belongs to the DegT/DnrJ/EryC1 family. As to quaternary structure, homotetramer. Requires pyridoxal 5'-phosphate as cofactor.

The catalysed reaction is GDP-alpha-D-perosamine + 2-oxoglutarate = GDP-4-dehydro-alpha-D-rhamnose + L-glutamate. The protein operates within bacterial outer membrane biogenesis; LPS O-antigen biosynthesis. Its function is as follows. Catalyzes the synthesis of GDP-perosamine from GDP-4-keto-6-deoxy-D-mannose and L-glutamate. Also shows weak activity with L-glutamine. The protein is GDP-perosamine synthase of Vibrio cholerae.